The primary structure comprises 529 residues: Inosine-5'-monophosphate dehydrogenase (529 aa).

2 consecutive CBS domains span residues 129 to 185 and 189 to 246; these read MVTD…SKQV and MTKA…PLAT. NAD(+)-binding positions include Asp-283 and 334-336; that span reads GVG. Residues Gly-336 and Gly-338 each coordinate K(+). Ser-339 serves as a coordination point for IMP. Cys-341 contributes to the K(+) binding site. The active-site Thioimidate intermediate is the Cys-341. Residues 374-376, 397-398, and 421-425 each bind IMP; these read DGG, GS, and YRGMG. Arg-443 serves as the catalytic Proton acceptor. Glu-458 contacts IMP. K(+)-binding residues include Glu-511, Ser-512, and His-513.

It belongs to the IMPDH/GMPR family. In terms of assembly, homotetramer. Requires K(+) as cofactor.

The catalysed reaction is IMP + NAD(+) + H2O = XMP + NADH + H(+). It functions in the pathway purine metabolism; XMP biosynthesis via de novo pathway; XMP from IMP: step 1/1. Mycophenolic acid (MPA) is a non-competitive inhibitor that prevents formation of the closed enzyme conformation by binding to the same site as the amobile flap. In contrast, mizoribine monophosphate (MZP) is a competitive inhibitor that induces the closed conformation. MPA is a potent inhibitor of mammalian IMPDHs but a poor inhibitor of the bacterial enzymes. MZP is a more potent inhibitor of bacterial IMPDH. Its function is as follows. Catalyzes the conversion of inosine 5'-phosphate (IMP) to xanthosine 5'-phosphate (XMP), the first committed and rate-limiting step in the de novo synthesis of guanine nucleotides, and therefore plays an important role in the regulation of cell growth. The chain is Inosine-5'-monophosphate dehydrogenase from Mycobacterium bovis (strain ATCC BAA-935 / AF2122/97).